The primary structure comprises 988 residues: Chitin synthase 1 (988 aa).

Residues Gln29 to Pro75 form a disordered region. Residues Pro44–Ser66 are compositionally biased toward low complexity. 7 consecutive transmembrane segments (helical) span residues Trp577–Trp596, Phe616–Val636, Ile656–Leu676, Ile732–Phe752, Ser764–Cys784, Tyr864–Tyr884, and Ala911–Ile931. Positions Ala950–Gly988 are disordered. The span at Ser957–Ser976 shows a compositional bias: low complexity.

This sequence belongs to the chitin synthase family. Class II subfamily.

It is found in the cell membrane. It carries out the reaction [(1-&gt;4)-N-acetyl-beta-D-glucosaminyl](n) + UDP-N-acetyl-alpha-D-glucosamine = [(1-&gt;4)-N-acetyl-beta-D-glucosaminyl](n+1) + UDP + H(+). Functionally, polymerizes chitin, a structural polymer of the cell wall and septum, by transferring the sugar moiety of UDP-GlcNAc to the non-reducing end of the growing chitin polymer. CHS1 mainly responsible for normal yeast cell reproductive growth. This is Chitin synthase 1 from Exophiala dermatitidis (Black yeast-like fungus).